Here is a 20-residue protein sequence, read N- to C-terminus: Fibrinolytic zinc metalloproteinase (20 aa).

The region spanning 7–20 is the Peptidase M12B domain; that stretch reads RYVQLVITVDHVMN.

Zn(2+) is required as a cofactor.

The protein localises to the secreted. Its function is as follows. Hydrolyzes alpha and beta chains of human fibrinogen and human fibrin. No activity against the gamma chain of human fibrinogen, human thrombin, bovine serum albumin, ovalbumin and hemoglobin. Has anticoagulant activity on human plasma and protects mice against death due from experimentally induced platelet thromboembolism with an ED(50) of 40 ug/kg. The polypeptide is Fibrinolytic zinc metalloproteinase (Ganoderma lucidum (Ling zhi medicinal fungus)).